Here is a 121-residue protein sequence, read N- to C-terminus: Small ribosomal subunit protein uS13 (121 aa).

Positions arginine 93–lysine 121 are disordered. The span at alanine 106–lysine 121 shows a compositional bias: basic residues.

The protein belongs to the universal ribosomal protein uS13 family. In terms of assembly, part of the 30S ribosomal subunit. Forms a loose heterodimer with protein S19. Forms two bridges to the 50S subunit in the 70S ribosome.

In terms of biological role, located at the top of the head of the 30S subunit, it contacts several helices of the 16S rRNA. In the 70S ribosome it contacts the 23S rRNA (bridge B1a) and protein L5 of the 50S subunit (bridge B1b), connecting the 2 subunits; these bridges are implicated in subunit movement. Contacts the tRNAs in the A and P-sites. This is Small ribosomal subunit protein uS13 from Streptococcus uberis (strain ATCC BAA-854 / 0140J).